A 210-amino-acid chain; its full sequence is Orotate phosphoribosyltransferase (210 aa).

Residues Arg97, Lys101, His103, and 123-131 (EDLISTGGS) contribute to the 5-phospho-alpha-D-ribose 1-diphosphate site. Position 127 (Ser127) interacts with orotate.

It belongs to the purine/pyrimidine phosphoribosyltransferase family. PyrE subfamily. Homodimer. Mg(2+) is required as a cofactor.

The enzyme catalyses orotidine 5'-phosphate + diphosphate = orotate + 5-phospho-alpha-D-ribose 1-diphosphate. The protein operates within pyrimidine metabolism; UMP biosynthesis via de novo pathway; UMP from orotate: step 1/2. Functionally, catalyzes the transfer of a ribosyl phosphate group from 5-phosphoribose 1-diphosphate to orotate, leading to the formation of orotidine monophosphate (OMP). The sequence is that of Orotate phosphoribosyltransferase from Porphyromonas gingivalis (strain ATCC BAA-308 / W83).